A 453-amino-acid chain; its full sequence is ATP-dependent RNA helicase dbp8 (453 aa).

Positions 7–35 (KSFSDLGISPWLIDTLKALAIYEPTDIQE) match the Q motif motif. The region spanning 38–214 (IAQILEGRNC…YQPQKNNKPP (177 aa)) is the Helicase ATP-binding domain. 51–58 (AKTGSGKT) lines the ATP pocket. Positions 160 to 163 (DEAD) match the DEAD box motif. Residues 230 to 393 (TLQQSYIFVS…YEHVSENKML (164 aa)) form the Helicase C-terminal domain. Positions 413-453 (RGFGERRQKRNEKRLMANGISNKLKNSGRKKKAKNTLSTEK) are disordered.

Belongs to the DEAD box helicase family. DDX49/DBP8 subfamily.

The protein localises to the nucleus. Its subcellular location is the nucleolus. The enzyme catalyses ATP + H2O = ADP + phosphate + H(+). Functionally, ATP-binding RNA helicase involved in 40S ribosomal subunit biogenesis and is required for the normal formation of 18S rRNAs through pre-rRNA processing at A0, A1 and A2 sites. Required for vegetative growth. In Schizosaccharomyces pombe (strain 972 / ATCC 24843) (Fission yeast), this protein is ATP-dependent RNA helicase dbp8 (dbp8).